Here is a 1061-residue protein sequence, read N- to C-terminus: TonB-dependent transporter Oar (1061 aa).

An N-terminal signal peptide occupies residues 1 to 26; the sequence is MHLNRVLRETGVVVAAGLLYGSAAFA. The TBDR plug domain maps to 121–243; it reads EIVGAPPTID…TGGVINAVTR (123 aa). One can recognise a TBDR beta-barrel domain in the interval 248–1061; the sequence is EFHGSVFANW…QVRFGIRYTF (814 aa). The interval 701 to 722 is disordered; the sequence is RSLAEPGQGTATSCDPSSFESQ. The span at 709–722 shows a compositional bias: polar residues; that stretch reads GTATSCDPSSFESQ.

This sequence belongs to the TonB-dependent receptor family. As to quaternary structure, interacts with TonB. Part of a transport system composed of the outer membrane transporter Oar, the trans-periplasmic binding protein TonB and the inner membrane proteins ExbB and ExbD.

The protein localises to the cell outer membrane. Functionally, required for secretion of the protease PopC across the bacterial outer membrane. Binds and probably transports PopC from the periplasm to the extracellular milieu. It derives its energy for transport by interacting with the trans-periplasmic membrane protein TonB. Required for cellular adhesion during fruiting body formation, a multicellular developmental program that is induced in response to starvation. In Myxococcus xanthus, this protein is TonB-dependent transporter Oar.